The following is a 464-amino-acid chain: Chromosomal replication initiator protein DnaA (464 aa).

The tract at residues 1–74 is domain I, interacts with DnaA modulators; it reads MDAVGYEVFW…ERKFLELSGH (74 aa). Residues 74-117 are domain II; that stretch reads HPIKLLFAVKKGTPHGNTAPPKHVHTYLEKNSPAEVPSKKSFHP. A domain III, AAA+ region region spans residues 118–341; that stretch reads DLNRDYTFEN…GALTKIIAFI (224 aa). The ATP site is built by glycine 162, glycine 164, lysine 165, and threonine 166. Positions 342-464 are domain IV, binds dsDNA; sequence EVSGSITIDI…LKSKVQDSIR (123 aa).

The protein belongs to the DnaA family. As to quaternary structure, oligomerizes as a right-handed, spiral filament on DNA at oriC.

The protein localises to the cytoplasm. Plays an essential role in the initiation and regulation of chromosomal replication. ATP-DnaA binds to the origin of replication (oriC) to initiate formation of the DNA replication initiation complex once per cell cycle. Binds the DnaA box (a 9 base pair repeat at the origin) and separates the double-stranded (ds)DNA. Forms a right-handed helical filament on oriC DNA; dsDNA binds to the exterior of the filament while single-stranded (ss)DNA is stabiized in the filament's interior. The ATP-DnaA-oriC complex binds and stabilizes one strand of the AT-rich DNA unwinding element (DUE), permitting loading of DNA polymerase. After initiation quickly degrades to an ADP-DnaA complex that is not apt for DNA replication. Binds acidic phospholipids. This is Chromosomal replication initiator protein DnaA from Treponema pallidum (strain Nichols).